Reading from the N-terminus, the 300-residue chain is MPDTLIVLIGPTGVGKTELSLSIAEHFRTSIVSADSRQLYADLKIGTAAPTPEQLARVPHYFVGTLQLTDYYSAAQYEADVLAQLEILYQNHDTVILTGGSMMYIDAICKGIDDIPTVDNETRQLMLRRYEQEGLDTLCAELRLLDPEYYKIVDLKNPKRVIHALEICYMTGKTYTSFRTRTHKERPFRIIKIGLTRDREELYDRINRRVDIMMQDGLLEEARQVYPFRHLNSLNTVGYKEMFKYLDGEWTLEFAIGKIKQNSRIYSRKQMTWFKRDKDIVWFHPDQQTEIMQYIHSVNH.

Residue 10 to 17 (GPTGVGKT) participates in ATP binding. Position 12 to 17 (12 to 17 (TGVGKT)) interacts with substrate. Residues 35–38 (DSRQ) form an interaction with substrate tRNA region.

Belongs to the IPP transferase family. As to quaternary structure, monomer. It depends on Mg(2+) as a cofactor.

The catalysed reaction is adenosine(37) in tRNA + dimethylallyl diphosphate = N(6)-dimethylallyladenosine(37) in tRNA + diphosphate. Its function is as follows. Catalyzes the transfer of a dimethylallyl group onto the adenine at position 37 in tRNAs that read codons beginning with uridine, leading to the formation of N6-(dimethylallyl)adenosine (i(6)A). The protein is tRNA dimethylallyltransferase 1 of Phocaeicola vulgatus (strain ATCC 8482 / DSM 1447 / JCM 5826 / CCUG 4940 / NBRC 14291 / NCTC 11154) (Bacteroides vulgatus).